Reading from the N-terminus, the 440-residue chain is Trigger factor (440 aa).

Residues 163-248 (GDILTVDFLG…AKALKRRVAP (86 aa)) enclose the PPIase FKBP-type domain.

This sequence belongs to the FKBP-type PPIase family. Tig subfamily.

Its subcellular location is the cytoplasm. It catalyses the reaction [protein]-peptidylproline (omega=180) = [protein]-peptidylproline (omega=0). Involved in protein export. Acts as a chaperone by maintaining the newly synthesized protein in an open conformation. Functions as a peptidyl-prolyl cis-trans isomerase. This Acidiphilium cryptum (strain JF-5) protein is Trigger factor.